Here is a 147-residue protein sequence, read N- to C-terminus: Globin (147 aa).

The 146-residue stretch at 2 to 147 folds into the Globin domain; it reads SFSAAQVDTV…SVANGIGQYQ (146 aa). His-64 and His-95 together coordinate heme b.

The protein belongs to the globin family. As to quaternary structure, homodimer or homooligomer.

This is Globin from Aequiyoldia eightsii (Antarctic yoldia).